A 253-amino-acid polypeptide reads, in one-letter code: Ubiquinone biosynthesis O-methyltransferase (253 aa).

S-adenosyl-L-methionine is bound by residues Arg-47, Gly-78, Asp-99, and Met-141.

It belongs to the methyltransferase superfamily. UbiG/COQ3 family.

It catalyses the reaction a 3-demethylubiquinol + S-adenosyl-L-methionine = a ubiquinol + S-adenosyl-L-homocysteine + H(+). The catalysed reaction is a 3-(all-trans-polyprenyl)benzene-1,2-diol + S-adenosyl-L-methionine = a 2-methoxy-6-(all-trans-polyprenyl)phenol + S-adenosyl-L-homocysteine + H(+). It participates in cofactor biosynthesis; ubiquinone biosynthesis. O-methyltransferase that catalyzes the 2 O-methylation steps in the ubiquinone biosynthetic pathway. This Bradyrhizobium diazoefficiens (strain JCM 10833 / BCRC 13528 / IAM 13628 / NBRC 14792 / USDA 110) protein is Ubiquinone biosynthesis O-methyltransferase.